The primary structure comprises 376 residues: MLDLIQTRRDLHQIPEIGLEEFKTQAYLLDVIEKLTTGKDFVQIRTWRTGILVYLQGSQPERTIGWRTDIDGLPIVEQTGLPFASQHQGRMHACGHDFHMTIALGCLERALEEQPKNNLLFLFQPAEENEAGGMLMYEDGAFGDWLPNQFYGLHVRPDLKVGQIATNTHTLFVGTCEVKIRFKGKGGHAAFPHEANDALVAASYFVTQVQSVVSRNVNPIEGAVVTFGVFQAGTTNNVITETAFLHGTIRALTQDMSLLVQKRVKTVAEGVAAAFDMEVEVELKQGGYLPVENNPALARELMDFFDEKDGIELIDIEPAMTGEDFGYLLSKVDGVMFWLGIDSPYALHHPQMSPKEEVLAIGVAAVSSFLKKKAAE.

The active site involves Asp69. Glu128 functions as the Proton acceptor in the catalytic mechanism.

Belongs to the peptidase M20A family. N-acetyldiaminopimelate deacetylase subfamily.

It catalyses the reaction N-acetyl-(2S,6S)-2,6-diaminopimelate + H2O = (2S,6S)-2,6-diaminopimelate + acetate. It functions in the pathway amino-acid biosynthesis; L-lysine biosynthesis via DAP pathway; LL-2,6-diaminopimelate from (S)-tetrahydrodipicolinate (acetylase route): step 3/3. In terms of biological role, catalyzes the conversion of N-acetyl-diaminopimelate to diaminopimelate and acetate. This chain is N-acetyldiaminopimelate deacetylase, found in Streptococcus pneumoniae (strain P1031).